A 255-amino-acid chain; its full sequence is Hydroxyacylglutathione hydrolase (255 aa).

Residues histidine 59, histidine 61, aspartate 63, histidine 64, histidine 118, aspartate 144, and histidine 182 each contribute to the Zn(2+) site.

This sequence belongs to the metallo-beta-lactamase superfamily. Glyoxalase II family. As to quaternary structure, monomer. Zn(2+) is required as a cofactor.

The enzyme catalyses an S-(2-hydroxyacyl)glutathione + H2O = a 2-hydroxy carboxylate + glutathione + H(+). Its pathway is secondary metabolite metabolism; methylglyoxal degradation; (R)-lactate from methylglyoxal: step 2/2. Its function is as follows. Thiolesterase that catalyzes the hydrolysis of S-D-lactoyl-glutathione to form glutathione and D-lactic acid. This is Hydroxyacylglutathione hydrolase from Synechococcus sp. (strain WH7803).